Reading from the N-terminus, the 947-residue chain is DNA mismatch repair protein MutS 2 (947 aa).

A disordered region spans residues 623-643; that stretch reads IPNDTHLGSGPVPASRDGSDD. 659–666 is a binding site for ATP; that stretch reads GPNMSGKS. The disordered stretch occupies residues 841 to 916; that stretch reads AETADTGVEA…GAAAEDELPE (76 aa).

It belongs to the DNA mismatch repair MutS family.

Its function is as follows. This protein is involved in the repair of mismatches in DNA. It is possible that it carries out the mismatch recognition step. This protein has a weak ATPase activity. This chain is DNA mismatch repair protein MutS 2, found in Haloarcula marismortui (strain ATCC 43049 / DSM 3752 / JCM 8966 / VKM B-1809) (Halobacterium marismortui).